The primary structure comprises 161 residues: Anaerobic nitrite reductase Glb1-2 (161 aa).

Positions 9-158 (AFTEEQEALV…LASAIIAEMK (150 aa)) constitute a Globin domain. A Homodimerization motif is present at residues 42 to 46 (EIAPP). Heme b contacts are provided by S52, K66, H70, K100, T104, and H105. Positions 112-124 (PEHFEVTKQALLD) match the Homodimerization motif.

Belongs to the plant globin family. As to quaternary structure, homodimer. Heme b is required as a cofactor. Mainly expressed in root nodules and leaves, and, to a lower extent, in roots, stems, flowers and fruits. Accumulates in mature root nodules.

It catalyses the reaction Fe(III)-heme b-[protein] + nitric oxide + H2O = Fe(II)-heme b-[protein] + nitrite + 2 H(+). In terms of biological role, phytoglobin that reduces nitrite to nitric oxide (NO) under anoxic conditions (e.g. during flooding or in waterlogged soil) and upon root nodulation. Required for general plant development and during nodulation, especially for the onset of symbiosis. Monitors nitric oxide (NO) levels during early phase of the nitrogen-fixing symbiosis and buffers oxygen in functioning nodules. Necessary for the production of pods. May not function as an oxygen storage or transport protein. Has an unusually high affinity for O(2) through a hexacoordinate heme iron because of a very low dissociation constant. The protein is Anaerobic nitrite reductase Glb1-2 of Lotus japonicus (Lotus corniculatus var. japonicus).